We begin with the raw amino-acid sequence, 205 residues long: dTTP/UTP pyrophosphatase (205 aa).

Aspartate 81 (proton acceptor) is an active-site residue.

This sequence belongs to the Maf family. YhdE subfamily. It depends on a divalent metal cation as a cofactor.

It localises to the cytoplasm. The enzyme catalyses dTTP + H2O = dTMP + diphosphate + H(+). The catalysed reaction is UTP + H2O = UMP + diphosphate + H(+). Functionally, nucleoside triphosphate pyrophosphatase that hydrolyzes dTTP and UTP. May have a dual role in cell division arrest and in preventing the incorporation of modified nucleotides into cellular nucleic acids. The sequence is that of dTTP/UTP pyrophosphatase from Agathobacter rectalis (strain ATCC 33656 / DSM 3377 / JCM 17463 / KCTC 5835 / VPI 0990) (Eubacterium rectale).